We begin with the raw amino-acid sequence, 814 residues long: Testis-specific zinc finger protein topi (814 aa).

10 consecutive C2H2-type zinc fingers follow at residues 228–250 (NECTMCDRKFVHASGLVRHMEKH), 275–297 (VKCNSCGRIFYDPQVAFRHGLIH), 360–382 (LQCEFCEYIFADIAELLVHSASH), 429–453 (FVCNVCELKFANTDLLQEHRCTSFH), 467–490 (LPCDFCDVNFEFAHDFLAHSEEKH), 511–533 (YLCDICGKSYTQSSHLWQHLRFH), 539–564 (FVCQEENCDRKFTIRPDLNDHIRKCH), 570–592 (YLCLVCGKRFLTGSVFYQHRLIH), 598–620 (YECEECGKRFYRADALKNHQRIH), and 626–649 (YSCLFCTKTFRQRGDRDKHIRARH). A disordered region spans residues 669 to 705 (TAAAQKAQSHNPEQQDNDVAGGASTSDVPSGSGFMST). Over residues 691–705 (ASTSDVPSGSGFMST) the composition is skewed to polar residues.

Interacts with comr. As to expression, expressed in testis; primary spermatocytes.

The protein resides in the nucleus. Functionally, required for male meiotic division and spermatid differentiation. Required for accumulation of aly and comr on chromatin. May function as a transcription factor. The protein is Testis-specific zinc finger protein topi (topi) of Drosophila melanogaster (Fruit fly).